The chain runs to 541 residues: Tetratricopeptide repeat protein 8 (541 aa).

The TPR 1 repeat unit spans residues 14–47 (YFRRRKFQLCADLCTQMLEKSPYDQEPDPELPVH). The segment at 118–137 (PITGFLRPSTQSGRPGTMEQ) is disordered. TPR repeat units lie at residues 251–284 (WWWKVQIGKCYYRLGMYREAEKQFKSALKQQEMV), 285–317 (DTFLYLAKVYVSLDQPVTALNLFKQGLDKFPGE), 318–351 (VTLLCGIARIYEEMNNMSSAAEYYKEVLKQDNTH), 352–385 (VEAIACIGSNHFYSDQPEIALRFYRRLLQMGIYN), 386–419 (GQLFNNLGLCCFYAQQYDMTLTSFERALSLAENE), 423–456 (ADVWYNLGHVAVGIGDTNLAHQCFRLALVNNNNH), and 457–490 (AEAYNNLAVLEMRKGHVEQARALLQTASSLAPHM).

Part of BBSome complex, that contains BBS1, BBS2, BBS4, BBS5, BBS7, BBS8/TTC8, BBS9 and BBIP10. Interacts with PCM1. Interacts with CCDC28B. Interacts with PKD1. Widely expressed.

It localises to the cytoplasm. Its subcellular location is the cytoskeleton. The protein resides in the microtubule organizing center. The protein localises to the centrosome. It is found in the cell projection. It localises to the cilium membrane. Its subcellular location is the centriolar satellite. The protein resides in the cilium. In terms of biological role, the BBSome complex is thought to function as a coat complex required for sorting of specific membrane proteins to the primary cilia. The BBSome complex is required for ciliogenesis but is dispensable for centriolar satellite function. This ciliogenic function is mediated in part by the Rab8 GDP/GTP exchange factor, which localizes to the basal body and contacts the BBSome. Rab8(GTP) enters the primary cilium and promotes extension of the ciliary membrane. Firstly the BBSome associates with the ciliary membrane and binds to RAB3IP/Rabin8, the guanosyl exchange factor (GEF) for Rab8 and then the Rab8-GTP localizes to the cilium and promotes docking and fusion of carrier vesicles to the base of the ciliary membrane. The BBSome complex, together with the LTZL1, controls SMO ciliary trafficking and contributes to the sonic hedgehog (SHH) pathway regulation. Required for proper BBSome complex assembly and its ciliary localization. This chain is Tetratricopeptide repeat protein 8 (TTC8), found in Homo sapiens (Human).